The sequence spans 471 residues: Neuraminidase (471 aa).

Over 1 to 6 (MNPNQK) the chain is Intravirion. A helical transmembrane segment spans residues 7–27 (IICISATGMTLSVVSLLIGIA). Positions 11-33 (SATGMTLSVVSLLIGIANLGLNI) are involved in apical transport and lipid raft association. Residues 28 to 471 (NLGLNIGLHY…HDGAEIIYFK (444 aa)) are Virion surface-facing. The tract at residues 36–89 (HYKVGDTPDVNTPNVNGTNSTTTTIINNNTQNNFTNITNIIHNKNEERTFLNLT) is hypervariable stalk region. N-linked (GlcNAc...) asparagine; by host glycans are attached at residues Asn51, Asn54, Asn63, Asn68, Asn71, and Asn87. Residues 92 to 471 (LCEVNSWHIL…HDGAEIIYFK (380 aa)) are head of neuraminidase. Cystine bridges form between Cys93-Cys420, Cys125-Cys130, Cys185-Cys232, Cys234-Cys239, Cys280-Cys293, Cys282-Cys291, Cys320-Cys338, and Cys424-Cys450. Arg119 provides a ligand contact to substrate. The N-linked (GlcNAc...) asparagine; by host glycan is linked to Asn147. Asp152 serves as the catalytic Proton donor/acceptor. Residue Arg153 coordinates substrate. N-linked (GlcNAc...) asparagine; by host glycosylation is present at Asn202. 278 to 279 (EE) lines the substrate pocket. Arg294 contributes to the substrate binding site. Residues Asp295, Gly299, and Asp326 each coordinate Ca(2+). Position 373 (Arg373) interacts with substrate. N-linked (GlcNAc...) asparagine; by host glycosylation occurs at Asn403. Catalysis depends on Tyr407, which acts as the Nucleophile.

The protein belongs to the glycosyl hydrolase 34 family. In terms of assembly, homotetramer. Ca(2+) is required as a cofactor. In terms of processing, N-glycosylated.

The protein resides in the virion membrane. It is found in the host apical cell membrane. The catalysed reaction is Hydrolysis of alpha-(2-&gt;3)-, alpha-(2-&gt;6)-, alpha-(2-&gt;8)- glycosidic linkages of terminal sialic acid residues in oligosaccharides, glycoproteins, glycolipids, colominic acid and synthetic substrates.. With respect to regulation, inhibited by the neuraminidase inhibitors zanamivir (Relenza) and oseltamivir (Tamiflu). These drugs interfere with the release of progeny virus from infected cells and are effective against all influenza strains. Resistance to neuraminidase inhibitors is quite rare. Catalyzes the removal of terminal sialic acid residues from viral and cellular glycoconjugates. Cleaves off the terminal sialic acids on the glycosylated HA during virus budding to facilitate virus release. Additionally helps virus spread through the circulation by further removing sialic acids from the cell surface. These cleavages prevent self-aggregation and ensure the efficient spread of the progeny virus from cell to cell. Otherwise, infection would be limited to one round of replication. Described as a receptor-destroying enzyme because it cleaves a terminal sialic acid from the cellular receptors. May facilitate viral invasion of the upper airways by cleaving the sialic acid moieties on the mucin of the airway epithelial cells. Likely to plays a role in the budding process through its association with lipid rafts during intracellular transport. May additionally display a raft-association independent effect on budding. Plays a role in the determination of host range restriction on replication and virulence. Sialidase activity in late endosome/lysosome traffic seems to enhance virus replication. The protein is Neuraminidase of Influenza A virus (strain A/Gull/Maryland/704/1977 H13N6).